A 234-amino-acid polypeptide reads, in one-letter code: Meiotically up-regulated gene 35 protein (234 aa).

A compositionally biased stretch (basic and acidic residues) spans 126–156 (DSSGDLTSTDKERDVSPVSHSEKPYWDRYDL). The interval 126-176 (DSSGDLTSTDKERDVSPVSHSEKPYWDRYDLDQPSNQDVEESRNLVQEPKH) is disordered. Phosphoserine occurs at positions 127 and 128. Position 132 is a phosphothreonine (Thr132). Ser141 bears the Phosphoserine mark.

It localises to the cytoplasm. Has a role in meiosis. The polypeptide is Meiotically up-regulated gene 35 protein (mug35) (Schizosaccharomyces pombe (strain 972 / ATCC 24843) (Fission yeast)).